The sequence spans 5541 residues: Malpibaldin synthetase (5541 aa).

Residues 1–13 show a composition bias toward basic and acidic residues; that stretch reads MGDKRPDGIKSAE. Positions 1–26 are disordered; it reads MGDKRPDGIKSAESHGQPSAPFGAEN. Positions 137–378 are condensation 1; the sequence is KEDDIARDES…IDIISPAEKT (242 aa). The interval 401 to 799 is adenylation 1; the sequence is FEEQVDKSPD…GRNDDQVKIR (399 aa). The region spanning 901–975 is the Carrier 1 domain; it reads VPCGETEDAI…VLAQDLSKHQ (75 aa). Residue serine 936 is modified to O-(pantetheine 4'-phosphoryl)serine. The tract at residues 1021 to 1469 is dual epimerase/condensation (E/C) domain 1; sequence QDVYSLAPLQ…LPLDERTKLL (449 aa). An adenylation 2 region spans residues 1489-1899; it reads FEQQVKQSPI…GRNDDQIKIR (411 aa). The region spanning 2001–2075 is the Carrier 2 domain; sequence SPQGRIECAL…SFAQAFKGQL (75 aa). The residue at position 2036 (serine 2036) is an O-(pantetheine 4'-phosphoryl)serine. The tract at residues 2095–2537 is condensation 2; sequence ELSFSQQRLW…LGSTEEELLL (443 aa). Positions 2557–2956 are adenylation 3; that stretch reads FEDQVERSPD…GRNDDQVKIR (400 aa). The Carrier 3 domain maps to 3058–3132; that stretch reads EPQGEVEMKL…VLAASITRGC (75 aa). At serine 3093 the chain carries O-(pantetheine 4'-phosphoryl)serine. A dual epimerase/condensation (E/C) domain 2 region spans residues 3182 to 3616; the sequence is QDIYSLSPLQ…VIPAEEHDLL (435 aa). The adenylation 4 stretch occupies residues 3637-4038; it reads FENQVRERPE…GRNDEQVKIR (402 aa). Positions 4140-4214 constitute a Carrier 4 domain; the sequence is APRGDIEISL…VLAASLNTHQ (75 aa). The residue at position 4175 (serine 4175) is an O-(pantetheine 4'-phosphoryl)serine. The segment at 4260–4695 is dual epimerase/condensation (E/C) domain 3; sequence VQDVYSLSPL…VIPAEEHDLL (436 aa). The interval 4716–5117 is adenylation 5; sequence FENQVRERPE…GRNDEQVKIR (402 aa). The Carrier 5 domain maps to 5219 to 5294; sequence LPSGDVEIGL…ELAQKLVQGG (76 aa). An O-(pantetheine 4'-phosphoryl)serine modification is found at serine 5254. Residues 5315 to 5523 form a thioesterase (TE) domain region; sequence PLFCIHSGLG…VECTHIEMDK (209 aa).

Belongs to the NRP synthetase family.

Functionally, nonribosomal peptide synthetase that catalyzes the biosynthesis of the hydrophobic cyclopentapeptides malpibaldins, natural products that show biosurfactant activities. Module 3 shows promiscuous adenylation (accepting either Trp, Phe or Tyr) leading to the parallel production of multiple products from one NRPS assembly line, including malpibaldin A corresponding to cyclo(-L-Leu-D-Leu-D-Phe-L-Leu-D-Val-), malpibaldin B corresponding to cyclo(-L-Leu-D-Leu-D-Tyr-L-Leu-D-Val-) and malpibaldin C corresponding to cyclo(-Leu-Leu-Trp-Leu-Val-). This is Malpibaldin synthetase from Mortierella alpina (Oleaginous fungus).